A 401-amino-acid chain; its full sequence is Voltage-gated potassium channel subunit beta-3 (401 aa).

2 stretches are compositionally biased toward polar residues: residues 1–14 and 32–41; these read MQVS…TLRS and GVSMAQTKQR. Positions 1 to 49 are disordered; the sequence is MQVSFACTEQTLRSRTSEDRLCPSRPSGGQNGVSMAQTKQRTPPMGAKN. NADP(+) is bound by residues threonine 90, tryptophan 91, glutamine 97, and aspartate 119. Tyrosine 124 acts as the Proton donor/acceptor in catalysis. 17 residues coordinate NADP(+): asparagine 192, serine 222, arginine 223, glutamine 248, tryptophan 277, serine 278, proline 279, leucine 280, alanine 281, cysteine 282, lysine 288, arginine 298, glycine 357, serine 359, glutamine 363, glutamate 366, and asparagine 367.

It belongs to the shaker potassium channel beta subunit family. Forms heteromultimeric complex with alpha subunits. Identified in potassium channel complexes containing KCNA1 and KCNA2.

It localises to the cytoplasm. Functionally, regulatory subunit of the voltage-gated potassium (Kv) channels composed of pore-forming and potassium-conducting alpha subunits and of regulatory beta subunit. The beta-3/KCNAB3 subunit may mediate closure of potassium channels. Increases and accelerates inactivation of Kv1.1/KCNA1 and Kv2.2/KCNA2 subunit-containing channels. May display nicotinamide adenine dinucleotide phosphate (NADPH)-dependent aldoketoreductase activity. The binding of oxidized and reduced NADP(H) cofactors may be required for the regulation of potassium channel activity. In Xenopus laevis (African clawed frog), this protein is Voltage-gated potassium channel subunit beta-3 (kcnab3).